Consider the following 449-residue polypeptide: Elongation factor 1-alpha (449 aa).

Residues 5–230 (KVHINIVVIG…DQIQEPKRPS (226 aa)) enclose the tr-type G domain. The segment at 14 to 21 (GHVDSGKS) is G1. Position 14 to 21 (14 to 21 (GHVDSGKS)) interacts with GTP. Residue Lys-55 is modified to N6,N6-dimethyllysine. The G2 stretch occupies residues 70–74 (GITID). Lys-79 is subject to N6,N6,N6-trimethyllysine. The interval 91-94 (DAPG) is G3. GTP-binding positions include 91–95 (DAPGH) and 153–156 (NKMD). A G4 region spans residues 153–156 (NKMD). Lys-187 is subject to N6,N6,N6-trimethyllysine. The tract at residues 194–196 (SGF) is G5. N6-methyllysine is present on Lys-261. A 5-glutamyl glycerylphosphorylethanolamine modification is found at Glu-289. An N6,N6,N6-trimethyllysine modification is found at Lys-306. At Glu-362 the chain carries 5-glutamyl glycerylphosphorylethanolamine. Residue Lys-396 is modified to N6,N6,N6-trimethyllysine.

Belongs to the TRAFAC class translation factor GTPase superfamily. Classic translation factor GTPase family. EF-Tu/EF-1A subfamily.

The protein localises to the cytoplasm. In terms of biological role, this protein promotes the GTP-dependent binding of aminoacyl-tRNA to the A-site of ribosomes during protein biosynthesis. This is Elongation factor 1-alpha (EF1) from Manihot esculenta (Cassava).